The sequence spans 209 residues: Thymidylate kinase (209 aa).

13–20 contacts ATP; the sequence is GLEGAGKS.

This sequence belongs to the thymidylate kinase family.

It catalyses the reaction dTMP + ATP = dTDP + ADP. Functionally, phosphorylation of dTMP to form dTDP in both de novo and salvage pathways of dTTP synthesis. This Shewanella sp. (strain ANA-3) protein is Thymidylate kinase.